Reading from the N-terminus, the 327-residue chain is Probable cytosolic iron-sulfur protein assembly protein CIAO1 homolog (327 aa).

WD repeat units follow at residues 3 to 42 (GHEDRVWSVAWSPNGFVLASCGGDKTIRIWGKEGDKWICK), 48 to 87 (GHQRTIRSLGWSPCGTFLASASFDATTCIWDQKSGEFECN), 92 to 131 (GHENEVKSVDWSVSGSLLATCGRDKSVWIWEVQEDDEYEC), 137 to 176 (SHTQDVKKVVWHPTKEILASCSYDDTIKLYKEDEDDWSCC), 181 to 220 (GHESTVWSISFDGSGDRIVSCSDDKTVRIWKSYPPGNQEG), 239 to 278 (YHDRTIYDVHWSKVSGLIATASGDDCIRIFKEDTNSDRNQ), and 290 to 327 (AHSMDVNSICWHPKDENILATCSDDGTVKLWRFTPAEE).

This sequence belongs to the WD repeat CIA1 family.

Its function is as follows. Essential component of the cytosolic iron-sulfur (Fe/S) protein assembly machinery. Required for the maturation of extramitochondrial Fe/S proteins. In Nematostella vectensis (Starlet sea anemone), this protein is Probable cytosolic iron-sulfur protein assembly protein CIAO1 homolog.